The following is a 200-amino-acid chain: MNEIYLIGLGNPGKKYSNSRHNIGFLLLENLSKKYNSSFLLKDKLKSFYSEFKANDSTYRLFLPNTFMNNSGEAVLAILDWYKINLNQIFVIVDDKDLPLGKIRFRKKGSSGGHNGLKSIIEKLQTHDFNRIRIGIGSPPSTKETNNFNTISHVLGNISREEKSILDKVYVRVIESLEQLNTKKEEYIINKLNSFDIEQI.

Y16 contacts tRNA. H21 acts as the Proton acceptor in catalysis. F67, N69, and N115 together coordinate tRNA.

It belongs to the PTH family. In terms of assembly, monomer.

It is found in the cytoplasm. It carries out the reaction an N-acyl-L-alpha-aminoacyl-tRNA + H2O = an N-acyl-L-amino acid + a tRNA + H(+). Functionally, hydrolyzes ribosome-free peptidyl-tRNAs (with 1 or more amino acids incorporated), which drop off the ribosome during protein synthesis, or as a result of ribosome stalling. In terms of biological role, catalyzes the release of premature peptidyl moieties from peptidyl-tRNA molecules trapped in stalled 50S ribosomal subunits, and thus maintains levels of free tRNAs and 50S ribosomes. This Prochlorococcus marinus (strain MIT 9312) protein is Peptidyl-tRNA hydrolase.